The primary structure comprises 315 residues: Probable integrase/recombinase aq_aa09 (315 aa).

The Core-binding (CB) domain maps to 1-78 (MEHFIDTYLY…EVRLFYEWLQ (78 aa)). The Tyr recombinase domain occupies 106 to 313 (SKKKYYSDDE…REKQLEAILE (208 aa)). Residues Arg150, Lys186, His263, Arg266, and His289 contribute to the active site. Catalysis depends on Tyr299, which acts as the O-(3'-phospho-DNA)-tyrosine intermediate.

This sequence belongs to the 'phage' integrase family.

May function as an integrase. This is Probable integrase/recombinase aq_aa09 from Aquifex aeolicus (strain VF5).